The primary structure comprises 218 residues: MARRKVRPRLIAELARRVRALREQRERPRDSVRYALDYETLIRPHSGRKLPLRAWVDVRRESRLLQLLGRLPFFGLGRLVTRKSWLWQHDEPCYWRLTRVRPDYTAQNLDHGKAWGILTFKGKTESEAREIEQVMHHDWRLVPKHEEAAFTSFTPAPEETPRPVPYPPLLRAMILAERQKNGDPSTEEPMLSLERIRTDPWDYPENQEAKKKTKGTAV.

The tract at residues 178-218 (RQKNGDPSTEEPMLSLERIRTDPWDYPENQEAKKKTKGTAV) is disordered.

Belongs to the mitochondrion-specific ribosomal protein mS34 family. As to quaternary structure, component of the mitochondrial ribosome small subunit (28S) which comprises a 12S rRNA and about 30 distinct proteins.

Its subcellular location is the mitochondrion. In terms of biological role, required for mitochondrial translation, plays a role in maintaining the stability of the small ribosomal subunit and the 12S rRNA that are required for mitoribosome formation. This chain is Small ribosomal subunit protein mS34, found in Bos taurus (Bovine).